Here is a 137-residue protein sequence, read N- to C-terminus: Altered inheritance of mitochondria protein 11 (137 aa).

2 consecutive transmembrane segments (helical) span residues 20-37 and 66-88; these read YGAAAFTLITMRLISRAI and LTYASAASIGTFSTLIFGFCWAL.

It belongs to the AIM11 family.

It localises to the membrane. This is Altered inheritance of mitochondria protein 11 (AIM11) from Saccharomyces cerevisiae (strain RM11-1a) (Baker's yeast).